A 403-amino-acid chain; its full sequence is S-adenosylmethionine synthase (403 aa).

Position 15 (His15) interacts with ATP. Asp17 contributes to the Mg(2+) binding site. K(+) is bound at residue Glu43. L-methionine-binding residues include Glu56 and Gln99. Positions 99–109 are flexible loop; the sequence is QSPDINQGVDR. Residues 166 to 168, 232 to 233, Asp241, 247 to 248, Ala264, and Lys268 contribute to the ATP site; these read DAK, KF, and RK. Asp241 lines the L-methionine pocket. Lys272 serves as a coordination point for L-methionine.

It belongs to the AdoMet synthase family. Homotetramer; dimer of dimers. It depends on Mg(2+) as a cofactor. The cofactor is K(+).

The protein resides in the cytoplasm. It carries out the reaction L-methionine + ATP + H2O = S-adenosyl-L-methionine + phosphate + diphosphate. It functions in the pathway amino-acid biosynthesis; S-adenosyl-L-methionine biosynthesis; S-adenosyl-L-methionine from L-methionine: step 1/1. Functionally, catalyzes the formation of S-adenosylmethionine (AdoMet) from methionine and ATP. The overall synthetic reaction is composed of two sequential steps, AdoMet formation and the subsequent tripolyphosphate hydrolysis which occurs prior to release of AdoMet from the enzyme. This is S-adenosylmethionine synthase from Xylella fastidiosa (strain Temecula1 / ATCC 700964).